The chain runs to 380 residues: Cytochrome b (380 aa).

The next 4 membrane-spanning stretches (helical) occupy residues 33–53, 77–98, 113–133, and 178–198; these read FGSL…FLAM, WLIR…YLHI, WNVG…GYVL, and FFAF…LHLL. Positions 83 and 97 each coordinate heme b. Heme b is bound by residues histidine 182 and histidine 196. Histidine 201 lines the a ubiquinone pocket. A run of 4 helical transmembrane segments spans residues 226–246, 288–308, 320–340, and 347–367; these read YKDL…ALFS, LGGV…PILH, FSQI…WIGG, and YIII…VFFP.

Belongs to the cytochrome b family. As to quaternary structure, the cytochrome bc1 complex contains 3 respiratory subunits (MT-CYB, CYC1 and UQCRFS1), 2 core proteins (UQCRC1 and UQCRC2) and probably 6 low-molecular weight proteins. Requires heme b as cofactor.

It localises to the mitochondrion inner membrane. In terms of biological role, component of the ubiquinol-cytochrome c reductase complex (complex III or cytochrome b-c1 complex) that is part of the mitochondrial respiratory chain. The b-c1 complex mediates electron transfer from ubiquinol to cytochrome c. Contributes to the generation of a proton gradient across the mitochondrial membrane that is then used for ATP synthesis. This is Cytochrome b (mt-cyb) from Apogon semilineatus (Half-lined cardinal).